Here is a 538-residue protein sequence, read N- to C-terminus: Poly [ADP-ribose] polymerase 2 (538 aa).

In terms of domain architecture, WGR spans 1 to 94 (MSIINDENGR…RDDEPVPNKY (94 aa)). A disordered region spans residues 104–133 (RQTEKEVKKEEPEPEPKVDEKNTRGRKKRG). Basic and acidic residues predominate over residues 105 to 126 (QTEKEVKKEEPEPEPKVDEKNT). Positions 148–285 (VEEVNEKLKE…GSIEASLELK (138 aa)) constitute a PARP alpha-helical domain. The PARP catalytic domain maps to 309-535 (EPVSEEIAGK…VKVDRLTAKE (227 aa)). Residues 357–381 (QEVPKKRGRKSTKTAAPTVPPPTTK) form a disordered region.

Belongs to the ARTD/PARP family.

Its subcellular location is the nucleus. It catalyses the reaction NAD(+) + (ADP-D-ribosyl)n-acceptor = nicotinamide + (ADP-D-ribosyl)n+1-acceptor + H(+).. The catalysed reaction is L-aspartyl-[protein] + NAD(+) = 4-O-(ADP-D-ribosyl)-L-aspartyl-[protein] + nicotinamide. It carries out the reaction L-glutamyl-[protein] + NAD(+) = 5-O-(ADP-D-ribosyl)-L-glutamyl-[protein] + nicotinamide. Its activity is regulated as follows. Inhibited by N-(6-oxo-5,6-dihydrophenanthridin-2-yl)-N,N-dimethylacetamide HCl (PJ34), 1,5-dihydroxyisoquinoline (DHQ) and 3-aminobenzamide (3AB). Poly[ADP-ribose] polymerase modifies various nuclear proteins by poly(ADP-ribosyl)ation, a post-translational modification synthesized after DNA damage that appears as an obligatory step in a detection/signaling pathway leading to the reparation of DNA strand breaks and programmed cell death. The polypeptide is Poly [ADP-ribose] polymerase 2 (Caenorhabditis elegans).